The primary structure comprises 185 residues: MTDHSCIPELKVRYVQQIVPDMMRDFGYSTVMQVPKLLKIVLSMGLGEALANRKLLDASVADLGVISGQHAVKTRARKSIANFKLREGNEIGVMVTLRRSRMYEFLHRLINVALPRVKDFRGVSPXGFDGHGNYSMGITEQIIFPEIDFDKIERISGLNVNVVTSAQTDQEARTLLTKLGMPFRK.

Belongs to the universal ribosomal protein uL5 family. Part of the 50S ribosomal subunit; part of the 5S rRNA/L5/L18/L25 subcomplex. Contacts the 5S rRNA and the P site tRNA. Forms a bridge to the 30S subunit in the 70S ribosome.

Functionally, this is one of the proteins that bind and probably mediate the attachment of the 5S RNA into the large ribosomal subunit, where it forms part of the central protuberance. In the 70S ribosome it contacts protein S13 of the 30S subunit (bridge B1b), connecting the 2 subunits; this bridge is implicated in subunit movement. Contacts the P site tRNA; the 5S rRNA and some of its associated proteins might help stabilize positioning of ribosome-bound tRNAs. This Treponema pallidum (strain Nichols) protein is Large ribosomal subunit protein uL5.